The chain runs to 319 residues: Bidirectional sugar transporter SWEET15 (319 aa).

At 1-10 the chain is on the extracellular side; the sequence is MAFMSMERST. The chain crosses the membrane as a helical span at residues 11–31; the sequence is WAFTFGILGNLISLMVFLSPL. Residues 13–99 form the MtN3/slv 1 domain; sequence FTFGILGNLI…AMYLAYAPKS (87 aa). Residues 32 to 50 lie on the Cytoplasmic side of the membrane; sequence PTFYRVYRKKSTEGFQSTP. The chain crosses the membrane as a helical span at residues 51-71; the sequence is YVVTLFSCMLWMYYAFVKSGA. Residue glutamate 72 is a topological domain, extracellular. Residues 73–93 form a helical membrane-spanning segment; it reads LLVTINGVGCVIETVYLAMYL. The Cytoplasmic segment spans residues 94-106; the sequence is AYAPKSARMLTAK. Residues 107–127 form a helical membrane-spanning segment; sequence MLLGLNIGLFGVIALVTLLLS. Residues 128–134 lie on the Extracellular side of the membrane; that stretch reads RGELRVH. A helical membrane pass occupies residues 135–155; it reads VLGWICVAVSLSVFAAPLSII. Positions 135-219 constitute a MtN3/slv 2 domain; that stretch reads VLGWICVAVS…ALYMAYRSKK (85 aa). The Cytoplasmic portion of the chain corresponds to 156–167; sequence RLVIRTKSVEFM. The helical transmembrane segment at 168–188 threads the bilayer; sequence PFSLSFFLVLSAVIWFLYGLL. The Extracellular segment spans residues 189–191; that stretch reads KKD. Residues 192–212 traverse the membrane as a helical segment; it reads VFVALPNVLGFVFGVAQMALY. Over 213 to 319 the chain is Cytoplasmic; that stretch reads MAYRSKKPLV…KPDMAIVVEV (107 aa).

Belongs to the SWEET sugar transporter family. As to quaternary structure, forms homooligomers and/or heterooligomers.

Its subcellular location is the cell membrane. Functionally, mediates both low-affinity uptake and efflux of sugar across the plasma membrane. The sequence is that of Bidirectional sugar transporter SWEET15 (SWEET15) from Oryza sativa subsp. indica (Rice).